A 616-amino-acid chain; its full sequence is MTVLPDDGLSLAAEFPDATHEQWHRLVEGVVRKSGKDVSGTAAEEALSTTLEDGLTTRPLYTARDAAPDAGFPGFAPFVRGSVPEGNTPGGWDVRQRYASADPARTNEAVLTDLENGVTSLWLTLGSAGLPVTGLERALDGVYLDLVPVALDAGSEAATAARELLRLYEAAGVADDAVRGTLGADPLGHEARTGEKSTSFAAVAELARLCGERYPGLRALTVDALPYHEAGASAAQELGASLATGVEYLRALHDKGLGVEKAFAQLEFRFAATADQFLTIAKLRAARRLWARVAEVSGVPAAGAQRQHAVTSPVMMTRRDPWVNMLRTTVACLGAGVGGADAVTVLPFDHELGLPDAFARRIARNTSTILLEESHLARVIDPAGGSWYVERLTDELAHAAWDFFKEIERADGQVAALRSGLVGDRIAATWAERRKKLARRREPITGVSEFPLLTERPVEREPAPAAPPGGLPRVRRDEAYEELRGRSDAHLEATGARPKVFIAALGPAAAHTARATFAANLFMAGGVEPVHDPVSVDAETAAEAFAASGATVACLCSSDVLYAEQAEAVARALKSAGALRVFLAGRGEFADIDEYVFAGCDAVAVLTSTLDRMGVA.

The protein belongs to the methylmalonyl-CoA mutase family. In terms of assembly, heterodimer of an alpha and a beta chain. Adenosylcob(III)alamin is required as a cofactor.

It carries out the reaction (R)-methylmalonyl-CoA = succinyl-CoA. It participates in metabolic intermediate metabolism; propanoyl-CoA degradation; succinyl-CoA from propanoyl-CoA: step 3/3. In terms of biological role, catalyzes the isomerization of succinyl-CoA to methylmalonyl-CoA during synthesis of propionate from tricarboxylic acid-cycle intermediates. This conversion most likely represents an important source of building blocks for polyketide antibiotic biosynthesis. It is unable to catalyze the conversion of isobutyryl-CoA into N-butyryl-CoA. This chain is Methylmalonyl-CoA mutase small subunit (mutA), found in Streptomyces virginiae (Streptomyces cinnamonensis).